An 80-amino-acid chain; its full sequence is Small pacifastin protease inhibitor (80 aa).

The N-terminal stretch at 1-24 (MSKVLKVGLLLLLVAVAASAYAVA) is a signal peptide. A propeptide spanning residues 25–47 (EENGAPKENKQLPQIDDYGVTNK) is cleaved from the precursor. Positions 45–80 (TNKCPANQPFKWNCNYCTCGPEGKDASCTRMACPQH) constitute a Pacifastin domain. Cystine bridges form between C48–C63, C58–C77, and C61–C72.

Belongs to the protease inhibitor I19 family. As to expression, expressed in the venom apparatus. Low transcript levels are also detected in other tissues.

It is found in the secreted. Parasitic wasp protein that may interfere with the host immune response. The recombinant protein inhibits trypsin activity and prophenoloxidase (PPO) activation, an enzyme essential for both clotting and insect innate immune responses. It does not inhibit activity of chymotrypsin and protease K, and has no effect on phenoloxidase (PO) activity. The sequence is that of Small pacifastin protease inhibitor from Nasonia vitripennis (Parasitic wasp).